The primary structure comprises 547 residues: Varicidin biosynthesis cluster MFS-type transporer (547 aa).

Residues 1-17 (MTTSTSKNAISKSSQED) show a composition bias toward polar residues. Residues 1 to 33 (MTTSTSKNAISKSSQEDLCSDTKDKGSSGGGNE) are disordered. 11 helical membrane passes run 47–67 (LVLL…VCIS), 156–176 (LAPS…SVFT), 183–203 (WCFW…FLFV), 224–244 (ALGT…LQWG), 252–272 (SWRV…WLYV), 296–316 (ILFT…VPIW), 330–350 (INFL…GTLV), 360–382 (GQWR…WRYN), 392–412 (AGTL…PFIA), 422–442 (ISLG…VFLA), and 503–523 (CFLV…GMEW).

This sequence belongs to the major facilitator superfamily. TCR/Tet family.

The protein localises to the cell membrane. In terms of biological role, MFS-type transporer; part of the gene cluster that mediates the biosynthesis of varicidin A, an antifungal natural product containing a cis-octahydrodecalin core. This Talaromyces variabilis (Penicillium variabile) protein is Varicidin biosynthesis cluster MFS-type transporer.